A 2551-amino-acid chain; its full sequence is Probable polyketide synthase 13 (2551 aa).

The Ketosynthase family 3 (KS3) domain maps to Glu-10–Gln-434. Active-site for beta-ketoacyl synthase activity residues include Cys-176, His-317, and His-358. The segment at Gly-621–Tyr-654 is acyl/malonyl transferase. The active-site For acyl/malonyl transferase activity is the Ser-631. An N-terminal hotdog fold region spans residues Thr-928–Ser-1057. In terms of domain architecture, PKS/mFAS DH spans Thr-928–Ser-1226. Catalysis depends on His-961, which acts as the Proton acceptor; for dehydratase activity. A C-terminal hotdog fold region spans residues Asn-1076 to Ser-1226. The Proton donor; for dehydratase activity role is filled by Asp-1136. The Carrier domain occupies Asp-2465–Phe-2542. The residue at position 2502 (Ser-2502) is an O-(pantetheine 4'-phosphoryl)serine.

Pantetheine 4'-phosphate is required as a cofactor.

Probable polyketide synthase. The sequence is that of Probable polyketide synthase 13 (pks13) from Dictyostelium discoideum (Social amoeba).